A 128-amino-acid polypeptide reads, in one-letter code: Disintegrin gabonin-1 (128 aa).

A signal peptide spans 1–20 (MIQVLLVIICLAVFPYQGSS). Positions 21–47 (IILESGNVNDYEIVYPKKVTVLPTGAM) are excised as a propeptide. One can recognise a Disintegrin domain in the interval 47 to 112 (MNSAHPCCDP…DCPRNPNKGE (66 aa)). Intrachain disulfides connect Cys53-Cys76, Cys67-Cys73, Cys72-Cys97, and Cys85-Cys104. A Cell attachment site motif is present at residues 89–91 (RGD). The disordered stretch occupies residues 108–128 (PNKGESDELEWSAAATGSVLM).

The protein belongs to the disintegrin family. Dimeric disintegrin subfamily. Heterodimer with bitisgabonin (bitisgabonin-1 is the name of the heterodimer); disulfide-linked. As to expression, expressed by the venom gland.

The protein localises to the secreted. The heterodimer bitisgabonin-1 is a potent inhibitor of the adhesion of the RGD-dependent integrin alpha-5/beta-1 (ITGA5/ITGB1) to immobilized fibronectin. In Bitis gabonica (Gaboon adder), this protein is Disintegrin gabonin-1.